A 2731-amino-acid chain; its full sequence is MNPYEYESTLDCRDVGGGPTPAHAHPHAQGRTLPMSGHGRPTTDLGPVHGSQTLQHQNQQNLQAAQAAAQSSHYDYEYQHLAHRPPDTANNTAQRTHGRQGFLLEGVTPTAPPDVPPRNPTMSRMQNGRLTVNNPNDADFEPSCLVRTPSGNVYIPSGNLNINKGSPIDFKSGSACSTPTKDTLKGYERSTQGCMGPVLPQRSVMNGLPAHHYSAPMNFRKDLVARCSSPWFGIGSISVLFAFVVMLILLTTTGVIKWNQSPPCSVLVGNEASEVTAAKSTNTDLSKLHNSSVRAKNGQGIGLAQGQSGLGAAGVGSGGGSSAATVTTATSNSGTAQGLQSTSASAEATSSAATSSSQSSLTPSLSSSLANANNGGARTFPARSFPPDGTTFGQITLGQKLTKEIQPYSYWNMQFYQSEPAYVKFDYTIPRGASIGVYGRRNALPTHTQYHFKEVLSGFSASTRTARAAHLSITREVTRYMEPGHWFVSLYNDDGDVQELTFYAAVAEDMTQNCPNGCSGNGQCLLGHCQCNPGFGGDDCSESVCPVLCSQHGEYTNGECICNPGWKGKECSLRHDECEVADCSGHGHCVSGKCQCMRGYKGKFCEEVDCPHPNCSGHGFCADGTCICKKGWKGPDCATMDQDALQCLPDCSGHGTFDLDTQTCTCEAKWSGDDCSKELCDLDCGQHGRCEGDACACDPEWGGEYCNTRLCDVRCNEHGQCKNGTCLCVTGWNGKHCTIEGCPNSCAGHGQCRVSGEGQWECRCYEGWDGPDCGIALELNCGDSKDNDKDGLVDCEDPECCASHVCKTSQLCVSAPKPIDVLLRKQPPAITASFFERMKFLIDESSLQNYAKLETFNESRSAVIRGRVVTSLGMGLVGVRVSTTTLLEGFTLTRDDGWFDLMVNGGGAVTLQFGRAPFRPQSRIVQVPWNEVVIIDLVVMSMSEEKGLAVTTTHTCFAHDYDLMKPVVLASWKHGFQGACPDRSAILAESQVIQESLQIPGTGLNLVYHSSRAAGYLSTIKLQLTPDVIPTSLHLIHLRITIEGILFERIFEADPGIKFTYAWNRLNIYRQRVYGVTTAVVKVGYQYTDCTDIVWDIQTTKLSGHDMSISEVGGWNLDIHHRYNFHEGILQKGDGSNIYLRNKPRIILTTMGDGHQRPLECPDCDGQATKQRLLAPVALAAAPDGSLFVGDFNYIRRIMTDGSIRTVVKLNATRVSYRYHMALSPLDGTLYVSDPESHQIIRVRDTNDYSQPELNWEAVVGSGERCLPGDEAHCGDGALAKDAKLAYPKGIAISSDNILYFADGTNIRMVDRDGIVSTLIGNHMHKSHWKPIPCEGTLKLEEMHLRWPTELAVSPMDNTLHIIDDHMILRMTPDGRVRVISGRPLHCATASTAYDTDLATHATLVMPQSIAFGPLGELYVAESDSQRINRVRVIGTDGRIAPFAGAESKCNCLERGCDCFEAEHYLATSAKFNTIAALAVTPDSHVHIADQANYRIRSVMSSIPEASPSREYEIYAPDMQEIYIFNRFGQHVSTRNILTGETTYVFTYNVNTSNGKLSTVTDAAGNKVFLLRDYTSQVNSIENTKGQKCRLRMTRMKMLHELSTPDNYNVTYEYHGPTGLLRTKLDSTGRSYVYNYDEFGRLTSAVTPTGRVIELSFDLSVKGAQVKVSENAQKEMSLLIQGATVIVRNGAAESRTTVDMDGSTTSITPWGHNLQMEVAPYTILAEQSPLLGESYPVPAKQRTEIAGDLANRFEWRYFVRRQQPLQAGKQSKGPPRPVTEVGRKLRVNGDNVLTLEYDRETQSVVVMVDDKQELLNVTYDRTSRPISFRPQSGDYADVDLEYDRFGRLVSWKWGVLQEAYSFDRNGRLNEIKYGDGSTMVYAFKDMFGSLPLKVTTPRRSDYLLQYDDAGALQSLTTPRGHIHAFSLQTSLGFFKYQYYSPINRHPFEILYNDEGQILAKIHPHQSGKVAFVHDTAGRLETILAGLSSTHYTYQDTTSLVKSVEVQEPGFELRREFKYHAGILKDEKLRFGSKNSLASARYKYAYDGNARLSGIEMAIDDKELPTTRYKYSQNLGQLEVVQDLKITRNAFNRTVIQDSAKQFFAIVDYDQHGRVKSVLMNVKNIDVFRLELDYDLRNRIKSQKTTFGRSTAFDKINYNADGHVVEVLGTNNWKYLFDENGNTVGVVDQGEKFNLGYDIGDRVIKVGDVEFNNYDARGFVVKRGEQKYRYNNRGQLIHSFERERFQSWYYYDDRSRLVAWHDNKGNTTQYYYANPRTPHLVTHVHFPKISRTMKLFYDDRDMLIALEHEDQRYYVATDQNGSPLAFFDQNGSIVKEMKRTPFGRIIKDTKPEFFVPIDFHGGLIDPHTKLVYTEQRQYDPHVGQWMTPLWETLATEMSHPTDVFIYRYHNNDPINPNKPQNYMIDLDSWLQLFGYDLNNMQSSRYTKLAQYTPQASIKSNTLAPDFGVISGLECIVEKTSEKFSDFDFVPKPLLKMEPKMRNLLPRVSYRRGVFGEGVLLSRIGGRALVSVVDGSNSVVQDVVSSVFNNSYFLDLHFSIHDQDVFYFVKDNVLKLRDDNEELRRLGGMFNISTHEISDHGGSAAKELRLHGPDAVVIIKYGVDPEQERHRILKHAHKRAVERAWELEKQLVAAGFQGRGDWTEEEKEELVQHGDVDGWNGIDIHSIHKYPQLADDPGNVAFQRDAKRKRRKTGSSHRSASNRRQLKFGELSA.

Disordered stretches follow at residues 1-60 (MNPY…QNQQ) and 103-136 (LLEG…NNPN). The Cytoplasmic portion of the chain corresponds to 1-229 (MNPYEYESTL…RKDLVARCSS (229 aa)). Positions 110-119 (TAPPDVPPRN) are enriched in pro residues. The segment covering 120 to 136 (PTMSRMQNGRLTVNNPN) has biased composition (polar residues). A helical membrane pass occupies residues 230 to 250 (PWFGIGSISVLFAFVVMLILL). At 251–2731 (TTTGVIKWNQ…RQLKFGELSA (2481 aa)) the chain is on the extracellular side. Residues 321–387 (SSAATVTTAT…RTFPARSFPP (67 aa)) form a disordered region. A compositionally biased stretch (low complexity) spans 322 to 370 (SAATVTTATSNSGTAQGLQSTSASAEATSSAATSSSQSSLTPSLSSSLA). EGF-like domains are found at residues 536–572 (GGDD…KECS), 574–606 (RHDE…KFCE), 643–676 (DALQ…DDCS), and 738–774 (TIEG…PDCG). 11 disulfide bridges follow: Cys540/Cys549, Cys545/Cys560, Cys562/Cys571, Cys578/Cys589, Cys583/Cys594, Cys596/Cys605, Cys651/Cys664, Cys666/Cys675, Cys742/Cys752, Cys746/Cys762, and Cys764/Cys773. Asn857 carries an N-linked (GlcNAc...) asparagine glycan. NHL repeat units lie at residues 1160–1201 (ECPD…IMTD), 1202–1246 (GSIR…VRDT), 1391–1434 (STAY…VRVI), and 1459–1502 (CFEA…VMSS). A YD repeat occupies 1618-1652 (TGLLRTKLDSTGRSYVYNYDEFGRLTSAVTPTGRV). Residues 2691–2731 (LADDPGNVAFQRDAKRKRRKTGSSHRSASNRRQLKFGELSA) are disordered. Residues 2704-2724 (AKRKRRKTGSSHRSASNRRQL) show a composition bias toward basic residues.

The protein belongs to the tenascin family. Teneurin subfamily. As to quaternary structure, homodimer. Heterodimer with Ten-a. Interacts with Ten-a; the interaction occurs at the neuromuscular junction. Interacts with alpha-Spec and cher. In terms of processing, phosphorylated. Phosphorylation occurs at tyrosine residues. Proteolytically cleaved. As to expression, expressed in muscles and motor neurons (at protein level).

It localises to the cytoplasm. It is found in the postsynaptic cell membrane. The protein localises to the synapse. Its subcellular location is the synaptosome. The protein resides in the membrane. Involved in neural development, regulating the establishment of proper connectivity within the nervous system. Acts as a homophilic and heterophilic synaptic cell adhesion molecule that drives synapse assembly. Promotes bi-directional trans-synaptic signaling with Ten-a to organize neuromuscular synapses. Functions in olfactory synaptic partner matching by promoting homophilic cell adhesion between pre-synaptic olfactory receptor neurons (ORN) axons and post-synaptic projection neurons (PN) dendrites partner in the developing antennal lobe to form stable connections. Also required for peripheral axon growth cone guidance and target recognition of motor neurons. The sequence is that of Teneurin-m (Ten-m) from Drosophila melanogaster (Fruit fly).